The chain runs to 398 residues: Lipase member K (398 aa).

An N-terminal signal peptide occupies residues 1–19 (MWWLLATTCCVLLSGPIDG). In terms of domain architecture, AB hydrolase-1 spans 78–377 (VVYLQHGLIA…HYNHMDFYLG (300 aa)). Ser-171 acts as the Nucleophile in catalysis. Cys-245 and Cys-254 form a disulfide bridge. N-linked (GlcNAc...) asparagine glycans are attached at residues Asn-270 and Asn-326. Residues Asp-342 and His-371 each act as charge relay system in the active site.

The protein belongs to the AB hydrolase superfamily. Lipase family.

Its subcellular location is the secreted. Its function is as follows. Plays a highly specific role in the last step of keratinocyte differentiation. May have an essential function in lipid metabolism of the most differentiated epidermal layers. The polypeptide is Lipase member K (Lipk) (Mus musculus (Mouse)).